Consider the following 449-residue polypeptide: Myb-related protein Pp1 (449 aa).

Residues 1–30 (LGNRWSAIAIPRRTDNEIKNYWNTHLKKRL) form the HTH myb-type domain. The segment at residues 5–26 (WSAIAIPRRTDNEIKNYWNTHL) is a DNA-binding region (H-T-H motif).

Its subcellular location is the nucleus. Functionally, possible transcription activator. The sequence is that of Myb-related protein Pp1 (PP1) from Physcomitrium patens (Spreading-leaved earth moss).